Here is an 862-residue protein sequence, read N- to C-terminus: DNA mismatch repair protein MutS (862 aa).

613–620 (GPNMAGKS) is a binding site for ATP.

This sequence belongs to the DNA mismatch repair MutS family.

Functionally, this protein is involved in the repair of mismatches in DNA. It is possible that it carries out the mismatch recognition step. This protein has a weak ATPase activity. The chain is DNA mismatch repair protein MutS from Desulfitobacterium hafniense (strain Y51).